The primary structure comprises 514 residues: ATP synthase subunit alpha (514 aa).

170–177 provides a ligand contact to ATP; it reads GDRQIGKT.

Belongs to the ATPase alpha/beta chains family. As to quaternary structure, F-type ATPases have 2 components, CF(1) - the catalytic core - and CF(0) - the membrane proton channel. CF(1) has five subunits: alpha(3), beta(3), gamma(1), delta(1), epsilon(1). CF(0) has three main subunits: a(1), b(2) and c(9-12). The alpha and beta chains form an alternating ring which encloses part of the gamma chain. CF(1) is attached to CF(0) by a central stalk formed by the gamma and epsilon chains, while a peripheral stalk is formed by the delta and b chains.

Its subcellular location is the cell inner membrane. The catalysed reaction is ATP + H2O + 4 H(+)(in) = ADP + phosphate + 5 H(+)(out). Its function is as follows. Produces ATP from ADP in the presence of a proton gradient across the membrane. The alpha chain is a regulatory subunit. This chain is ATP synthase subunit alpha, found in Pseudomonas putida (strain W619).